The following is a 233-amino-acid chain: MTEESHPLRGAGNFFGRRHGKPLRSHQKNLFEDLLPRLKINVENPAPQDLRTLFEAKVDAVRLEIGFGGGEHLHHETGRYPQTGFIGVEPFINGMAKMLAALDGEPRSNLRLYDEDATAVLDWLPDASLSGIDLFYPDPWHKRRHWKRRFVSDANLDRFARVLKPGAKFRFASDIEHYVNWTLQHCRRHPAFDWQAEGPSDWNHAYEGWPGTRYEAKAFREGRRAAYLTFIRR.

Residues 1 to 21 (MTEESHPLRGAGNFFGRRHGK) form a disordered region. S-adenosyl-L-methionine is bound by residues Glu-64, Glu-89, Asp-116, and Asp-138. Residue Asp-138 is part of the active site. Residues Lys-142, Asp-174, and 212-215 (TRYE) contribute to the substrate site.

The protein belongs to the class I-like SAM-binding methyltransferase superfamily. TrmB family.

It carries out the reaction guanosine(46) in tRNA + S-adenosyl-L-methionine = N(7)-methylguanosine(46) in tRNA + S-adenosyl-L-homocysteine. It participates in tRNA modification; N(7)-methylguanine-tRNA biosynthesis. In terms of biological role, catalyzes the formation of N(7)-methylguanine at position 46 (m7G46) in tRNA. The protein is tRNA (guanine-N(7)-)-methyltransferase of Brucella anthropi (strain ATCC 49188 / DSM 6882 / CCUG 24695 / JCM 21032 / LMG 3331 / NBRC 15819 / NCTC 12168 / Alc 37) (Ochrobactrum anthropi).